We begin with the raw amino-acid sequence, 718 residues long: Peroxisomal bifunctional enzyme (718 aa).

The tract at residues 1–280 is enoyl-CoA hydratase / isomerase; the sequence is MAEYLRLPHS…FAEKSANKWS (280 aa). Lys-38 carries the N6-succinyllysine modification. Gly-99 contributes to the substrate binding site. Residues Lys-163 and Lys-172 each carry the N6-acetyllysine; alternate modification. N6-succinyllysine; alternate is present on residues Lys-163 and Lys-172. The residue at position 181 (Lys-181) is an N6-succinyllysine. 2 positions are modified to N6-acetyllysine; alternate: Lys-189 and Lys-217. 2 positions are modified to N6-succinyllysine; alternate: Lys-189 and Lys-217. Residue Lys-240 is modified to N6-succinyllysine. The residue at position 248 (Lys-248) is an N6-acetyllysine. Lys-252 carries the N6-succinyllysine modification. Lys-274 is modified (N6-acetyllysine; alternate). At Lys-274 the chain carries N6-succinyllysine; alternate. N6-succinyllysine is present on residues Lys-278, Lys-288, and Lys-329. The 3-hydroxyacyl-CoA dehydrogenase stretch occupies residues 281–567; that stretch reads TPSGASWKTA…DMLCEAGRFG (287 aa). N6-acetyllysine is present on residues Lys-344, Lys-348, Lys-355, and Lys-459. Position 527 is an N6-succinyllysine (Lys-527). Position 543 is a phosphothreonine (Thr-543). The residue at position 572 (Lys-572) is an N6-succinyllysine. Lys-579, Lys-586, and Lys-705 each carry N6-acetyllysine; alternate. 3 positions are modified to N6-succinyllysine; alternate: Lys-579, Lys-586, and Lys-705. The Microbody targeting signal signature appears at 716-718; the sequence is SKL. Lys-717 carries the post-translational modification N6-succinyllysine.

It in the N-terminal section; belongs to the enoyl-CoA hydratase/isomerase family. In the C-terminal section; belongs to the 3-hydroxyacyl-CoA dehydrogenase family. In terms of assembly, monomer. Acetylated, leading to enhanced enzyme activity. Acetylation is enhanced by up to 80% after treatment either with trichostin A (TCA) or with nicotinamide (NAM) with highest increase on Lys-344. Acetylation and enzyme activity increased by about 1.5% on addition of fatty acids.

The protein resides in the peroxisome. The catalysed reaction is a (3S)-3-hydroxyacyl-CoA = a (2E)-enoyl-CoA + H2O. It catalyses the reaction a 4-saturated-(3S)-3-hydroxyacyl-CoA = a (3E)-enoyl-CoA + H2O. The enzyme catalyses a (3Z)-enoyl-CoA = a 4-saturated (2E)-enoyl-CoA. It carries out the reaction a (3E)-enoyl-CoA = a 4-saturated (2E)-enoyl-CoA. The catalysed reaction is a (3S)-3-hydroxyacyl-CoA + NAD(+) = a 3-oxoacyl-CoA + NADH + H(+). It catalyses the reaction (2S,3S)-3-hydroxy-2-methylbutanoyl-CoA = (2E)-2-methylbut-2-enoyl-CoA + H2O. The enzyme catalyses (2E)-dodecenedioyl-CoA + H2O = (3S)-hydroxydodecanedioyl-CoA. It carries out the reaction (3S)-hydroxydodecanedioyl-CoA + NAD(+) = 3-oxododecanedioyl-CoA + NADH + H(+). The catalysed reaction is (2E)-octenedioyl-CoA + H2O = (3S)-hydroxyoctanedioyl-CoA. It catalyses the reaction (3S)-hydroxyoctanedioyl-CoA + NAD(+) = 3-oxooctanedioyl-CoA + NADH + H(+). The enzyme catalyses (2E)-decenedioyl-CoA + H2O = (3S)-hydroxydecanedioyl-CoA. It carries out the reaction (3S)-hydroxydecanedioyl-CoA + NAD(+) = 3-oxodecanedioyl-CoA + NADH + H(+). The catalysed reaction is (2E)-tetradecenedioyl-CoA + H2O = (3S)-hydroxytetradecanedioyl-CoA. It catalyses the reaction (3S)-hydroxytetradecanedioyl-CoA + NAD(+) = 3-oxotetradecanedioyl-CoA + NADH + H(+). The enzyme catalyses (3E,5Z)-tetradecadienoyl-CoA = (2E,5Z)-tetradecadienoyl-CoA. It carries out the reaction (3E,5Z)-octadienoyl-CoA = (2E,5Z)-octadienoyl-CoA. The catalysed reaction is (3S)-hydroxydecanoyl-CoA + NAD(+) = 3-oxodecanoyl-CoA + NADH + H(+). It catalyses the reaction (3E)-decenoyl-CoA = (2E)-decenoyl-CoA. The enzyme catalyses (3Z)-hexenoyl-CoA = (2E)-hexenoyl-CoA. It carries out the reaction (3E)-hexenoyl-CoA = (2E)-hexenoyl-CoA. The catalysed reaction is (3S)-hydroxydecanoyl-CoA = (2E)-decenoyl-CoA + H2O. It catalyses the reaction (3S)-hydroxyhexanoyl-CoA = (2E)-hexenoyl-CoA + H2O. The enzyme catalyses (3S)-hydroxyhexadecanoyl-CoA + NAD(+) = 3-oxohexadecanoyl-CoA + NADH + H(+). It carries out the reaction (3S)-hydroxyhexadecanoyl-CoA = (2E)-hexadecenoyl-CoA + H2O. The catalysed reaction is (2E)-hexadecenedioyl-CoA + H2O = (3S)-hydroxyhexadecanedioyl-CoA. It catalyses the reaction (3S)-hydroxyhexadecanedioyl-CoA + NAD(+) = 3-oxohexadecanedioyl-CoA + NADH + H(+). It participates in lipid metabolism; fatty acid beta-oxidation. Its activity is regulated as follows. Enzyme activity enhanced by acetylation. Functionally, peroxisomal trifunctional enzyme possessing 2-enoyl-CoA hydratase, 3-hydroxyacyl-CoA dehydrogenase, and delta 3, delta 2-enoyl-CoA isomerase activities. Catalyzes two of the four reactions of the long chain fatty acids peroxisomal beta-oxidation pathway. Can also use branched-chain fatty acids such as 2-methyl-2E-butenoyl-CoA as a substrate, which is hydrated into (2S,3S)-3-hydroxy-2-methylbutanoyl-CoA. Optimal isomerase for 2,5 double bonds into 3,5 form isomerization in a range of enoyl-CoA species. Also able to isomerize both 3-cis and 3-trans double bonds into the 2-trans form in a range of enoyl-CoA species. With HSD17B4, catalyzes the hydration of trans-2-enoyl-CoA and the dehydrogenation of 3-hydroxyacyl-CoA, but with opposite chiral specificity. Regulates the amount of medium-chain dicarboxylic fatty acids which are essential regulators of all fatty acid oxidation pathways. Also involved in the degradation of long-chain dicarboxylic acids through peroxisomal beta-oxidation. The chain is Peroxisomal bifunctional enzyme from Mus musculus (Mouse).